The sequence spans 437 residues: Bifunctional protein GlmU (437 aa).

The segment at 1–223 (MHNTAVILAA…WDECRGVNSR (223 aa)) is pyrophosphorylase. UDP-N-acetyl-alpha-D-glucosamine contacts are provided by residues 8 to 11 (LAAG), lysine 22, glutamine 70, 75 to 76 (GT), 96 to 98 (YGD), glycine 135, glutamate 149, asparagine 164, and asparagine 221. Residue aspartate 98 coordinates Mg(2+). Residue asparagine 221 coordinates Mg(2+). Residues 224 to 244 (AELAAAEAAMQSRLRAAALAA) form a linker region. The N-acetyltransferase stretch occupies residues 245–437 (GVTMTAPETV…AELRMTKGKR (193 aa)). UDP-N-acetyl-alpha-D-glucosamine is bound by residues arginine 310 and lysine 328. Histidine 340 functions as the Proton acceptor in the catalytic mechanism. Residues tyrosine 343 and asparagine 354 each coordinate UDP-N-acetyl-alpha-D-glucosamine. Acetyl-CoA is bound by residues alanine 357, 363-364 (NY), serine 382, alanine 400, and arginine 417.

The protein in the N-terminal section; belongs to the N-acetylglucosamine-1-phosphate uridyltransferase family. In the C-terminal section; belongs to the transferase hexapeptide repeat family. Homotrimer. Mg(2+) serves as cofactor.

It localises to the cytoplasm. The catalysed reaction is alpha-D-glucosamine 1-phosphate + acetyl-CoA = N-acetyl-alpha-D-glucosamine 1-phosphate + CoA + H(+). It carries out the reaction N-acetyl-alpha-D-glucosamine 1-phosphate + UTP + H(+) = UDP-N-acetyl-alpha-D-glucosamine + diphosphate. It participates in nucleotide-sugar biosynthesis; UDP-N-acetyl-alpha-D-glucosamine biosynthesis; N-acetyl-alpha-D-glucosamine 1-phosphate from alpha-D-glucosamine 6-phosphate (route II): step 2/2. The protein operates within nucleotide-sugar biosynthesis; UDP-N-acetyl-alpha-D-glucosamine biosynthesis; UDP-N-acetyl-alpha-D-glucosamine from N-acetyl-alpha-D-glucosamine 1-phosphate: step 1/1. Its pathway is bacterial outer membrane biogenesis; LPS lipid A biosynthesis. Functionally, catalyzes the last two sequential reactions in the de novo biosynthetic pathway for UDP-N-acetylglucosamine (UDP-GlcNAc). The C-terminal domain catalyzes the transfer of acetyl group from acetyl coenzyme A to glucosamine-1-phosphate (GlcN-1-P) to produce N-acetylglucosamine-1-phosphate (GlcNAc-1-P), which is converted into UDP-GlcNAc by the transfer of uridine 5-monophosphate (from uridine 5-triphosphate), a reaction catalyzed by the N-terminal domain. The protein is Bifunctional protein GlmU of Acidiphilium cryptum (strain JF-5).